A 149-amino-acid polypeptide reads, in one-letter code: 5-hydroxytryptamine receptor 1E (149 aa).

The Extracellular segment spans residues 1-6 (HQPANY). A helical transmembrane segment spans residues 7 to 31 (LICSLAVTDLLVAVLVMPLSIMYIV). The Cytoplasmic portion of the chain corresponds to 32–39 (MDSWRLGY). Residues 40–65 (FICEVWLSVDMTCCTCSILHLCVIAL) traverse the membrane as a helical segment. A disulfide bond links cysteine 42 and cysteine 120. Serotonin-binding residues include aspartate 49 and cysteine 53. The DRY motif; important for ligand-induced conformation changes signature appears at 66-68 (DRY). The Extracellular segment spans residues 66-85 (DRYWAITNAIEYARKRTAKR). Residues 86-104 (AGLMILTVWTISIFISMPP) traverse the membrane as a helical segment. The Cytoplasmic portion of the chain corresponds to 105–149 (LFWRSHRQLSPPPSQCAIQHDHVIYTIYSTLGAFYIPLTLILILY).

Belongs to the G-protein coupled receptor 1 family.

The protein localises to the cell membrane. In terms of biological role, G-protein coupled receptor for 5-hydroxytryptamine (serotonin). Also functions as a receptor for various alkaloids and psychoactive substances. Ligand binding causes a conformation change that triggers signaling via guanine nucleotide-binding proteins (G proteins) and modulates the activity of downstream effectors, such as adenylate cyclase. HTR1E is coupled to G(i)/G(o) G alpha proteins and mediates inhibitory neurotransmission by inhibiting adenylate cyclase activity. The chain is 5-hydroxytryptamine receptor 1E (HTR1E) from Sus scrofa (Pig).